Here is a 315-residue protein sequence, read N- to C-terminus: Porphobilinogen deaminase (315 aa).

Cys-251 is subject to S-(dipyrrolylmethanemethyl)cysteine.

Belongs to the HMBS family. In terms of assembly, monomer. Dipyrromethane is required as a cofactor.

The enzyme catalyses 4 porphobilinogen + H2O = hydroxymethylbilane + 4 NH4(+). It functions in the pathway porphyrin-containing compound metabolism; protoporphyrin-IX biosynthesis; coproporphyrinogen-III from 5-aminolevulinate: step 2/4. Functionally, tetrapolymerization of the monopyrrole PBG into the hydroxymethylbilane pre-uroporphyrinogen in several discrete steps. This Sphingopyxis alaskensis (strain DSM 13593 / LMG 18877 / RB2256) (Sphingomonas alaskensis) protein is Porphobilinogen deaminase.